Reading from the N-terminus, the 293-residue chain is Plant cysteine oxidase 1 (293 aa).

Fe cation-binding residues include His-148, His-150, and His-211. A disordered region spans residues 250–293; that stretch reads SEDDDVLSSEEEKEGYAWLQERDDNPEDHTNVVGALYRGPKVED. The segment covering 251-262 has biased composition (acidic residues); that stretch reads EDDDVLSSEEEK. Basic and acidic residues predominate over residues 269 to 279; it reads QERDDNPEDHT.

Belongs to the cysteine dioxygenase family. The cofactor is Fe(2+).

Its subcellular location is the nucleus. It localises to the cytoplasm. It carries out the reaction L-cysteine + O2 = 3-sulfino-L-alanine + H(+). Its function is as follows. Catalyzes the oxidation of N-terminal cysteine residues (N-Cys), thus preparing the protein for N-end rule pathway-mediated proteasomal degradation, upstream of the N-end rule enzymes ATE1, ATE2 and PRT6. Controls the preparation of the group VII ethylene response factor (ERF-VII) proteins for degradation via the 26S proteasome N-end rule pathway. Acts as an oxygen sensor that controls the stability of ERF-VII proteins, which are stabilized in flooding-induced hypoxia, and regulate transcriptional adaptation to these adverse conditions. Not active on Cys located inside or at the C-terminus of a peptide. Acts redundantly with PCO2 to repress the anaerobic response. The polypeptide is Plant cysteine oxidase 1 (Arabidopsis thaliana (Mouse-ear cress)).